Reading from the N-terminus, the 418-residue chain is AP-3 complex subunit mu-1 (418 aa).

The 242-residue stretch at 176 to 417 (NNEAYFDVVE…VTKAGKFQVR (242 aa)) folds into the MHD domain.

The protein belongs to the adaptor complexes medium subunit family. Adaptor protein complex 3 (AP-3) is a heterotetramer composed of two large adaptins (delta-type subunit AP3D1 and beta-type subunit AP3B1 or AP3B2), a medium adaptin (mu-type subunit AP3M1 or AP3M2) and a small adaptin (sigma-type subunit APS1 or AP3S2). Interacts with AGAP1. AP-3 associates with the BLOC-1 complex.

It localises to the golgi apparatus. It is found in the cytoplasmic vesicle membrane. In terms of biological role, part of the AP-3 complex, an adaptor-related complex which is not clathrin-associated. The complex is associated with the Golgi region as well as more peripheral structures. It facilitates the budding of vesicles from the Golgi membrane and may be directly involved in trafficking to lysosomes. In concert with the BLOC-1 complex, AP-3 is required to target cargos into vesicles assembled at cell bodies for delivery into neurites and nerve terminals. This Bos taurus (Bovine) protein is AP-3 complex subunit mu-1 (AP3M1).